The primary structure comprises 251 residues: Coenzyme F420:L-glutamate ligase (251 aa).

Residues 9-12 (LPEI), 38-39 (ST), and K43 contribute to the GTP site. Residue D113 coordinates a divalent metal cation. A GTP-binding site is contributed by N116. A divalent metal cation-binding residues include D149, T150, and E207. 205 to 212 (AGEGDGGT) serves as a coordination point for GTP.

It belongs to the CofE family. Homodimer. Requires Mg(2+) as cofactor. It depends on Mn(2+) as a cofactor. K(+) is required as a cofactor.

The enzyme catalyses oxidized coenzyme F420-0 + GTP + L-glutamate = oxidized coenzyme F420-1 + GDP + phosphate + H(+). The catalysed reaction is oxidized coenzyme F420-1 + GTP + L-glutamate = oxidized coenzyme F420-2 + GDP + phosphate + H(+). It participates in cofactor biosynthesis; coenzyme F420 biosynthesis. Catalyzes the GTP-dependent successive addition of two or more gamma-linked L-glutamates to the L-lactyl phosphodiester of 7,8-didemethyl-8-hydroxy-5-deazariboflavin (F420-0) to form coenzyme F420-0-glutamyl-glutamate (F420-2) or polyglutamated F420 derivatives. The sequence is that of Coenzyme F420:L-glutamate ligase from Halorubrum lacusprofundi (strain ATCC 49239 / DSM 5036 / JCM 8891 / ACAM 34).